The chain runs to 156 residues: Small ribosomal subunit protein uS7 (156 aa).

This sequence belongs to the universal ribosomal protein uS7 family. In terms of assembly, part of the 30S ribosomal subunit. Contacts proteins S9 and S11.

Its function is as follows. One of the primary rRNA binding proteins, it binds directly to 16S rRNA where it nucleates assembly of the head domain of the 30S subunit. Is located at the subunit interface close to the decoding center, probably blocks exit of the E-site tRNA. The sequence is that of Small ribosomal subunit protein uS7 from Streptococcus gordonii (strain Challis / ATCC 35105 / BCRC 15272 / CH1 / DL1 / V288).